The chain runs to 268 residues: Tryptophan synthase alpha chain (268 aa).

Catalysis depends on proton acceptor residues Glu-49 and Asp-60.

The protein belongs to the TrpA family. In terms of assembly, tetramer of two alpha and two beta chains.

The catalysed reaction is (1S,2R)-1-C-(indol-3-yl)glycerol 3-phosphate + L-serine = D-glyceraldehyde 3-phosphate + L-tryptophan + H2O. The protein operates within amino-acid biosynthesis; L-tryptophan biosynthesis; L-tryptophan from chorismate: step 5/5. Functionally, the alpha subunit is responsible for the aldol cleavage of indoleglycerol phosphate to indole and glyceraldehyde 3-phosphate. This is Tryptophan synthase alpha chain from Shigella flexneri serotype 5b (strain 8401).